The primary structure comprises 240 residues: Flagellar L-ring protein (240 aa).

The first 20 residues, 1-20 (MIRNFLLFFMPIYAILFLSG), serve as a signal peptide directing secretion. Cys-21 is lipidated: N-palmitoyl cysteine. Cys-21 carries S-diacylglycerol cysteine lipidation.

Belongs to the FlgH family. The basal body constitutes a major portion of the flagellar organelle and consists of four rings (L,P,S, and M) mounted on a central rod.

The protein resides in the cell outer membrane. Its subcellular location is the bacterial flagellum basal body. Assembles around the rod to form the L-ring and probably protects the motor/basal body from shearing forces during rotation. This chain is Flagellar L-ring protein, found in Sulfurimonas denitrificans (strain ATCC 33889 / DSM 1251) (Thiomicrospira denitrificans (strain ATCC 33889 / DSM 1251)).